Consider the following 86-residue polypeptide: Collagen alpha-1(XII) chain (86 aa).

Residues 1–12 (NQPGPPGPPGPP) show a composition bias toward pro residues. Residues 1-86 (NQPGPPGPPG…PGRPGDSGIR (86 aa)) form a disordered region. Hydroxyproline occurs at positions 6, 9, 12, 18, 24, 27, 30, 42, 51, 54, 65, 74, 77, and 80. Over residues 16-25 (GEPGPGGRPG) the composition is skewed to gly residues. Over residues 35 to 50 (PQGERGLPGEXGERGL) the composition is skewed to low complexity. Residues 57 to 71 (QGESRTGPPGSTGSR) show a composition bias toward low complexity.

The protein belongs to the fibril-associated collagens with interrupted helices (FACIT) family. In terms of assembly, trimer of identical chains each containing 190 kDa of non-triple-helical sequences. The triple-helical tail is stabilized by disulfide bonds at each end. Post-translationally, prolines at the third position of the tripeptide repeating unit (G-X-Y) are hydroxylated in some or all of the chains.

The protein resides in the secreted. It localises to the extracellular space. It is found in the extracellular matrix. In terms of biological role, type XII collagen interacts with type I collagen-containing fibrils, the COL1 domain could be associated with the surface of the fibrils, and the COL2 and NC3 domains may be localized in the perifibrillar matrix. The sequence is that of Collagen alpha-1(XII) chain (COL12A1) from Bos taurus (Bovine).